The chain runs to 581 residues: uncharacterized protein (581 aa).

Ser28 bears the Phosphoserine mark. Helical transmembrane passes span 61 to 81 (LVLICLVSLVTGAIANDAGSA), 100 to 120 (AGVLFICVGYFTYLAMPATFL), 125 to 145 (CVYLVCLLFGMLGSMWFALVK), 187 to 207 (IYILSTSVGTYLGPLAAGYIA), 214 to 234 (WIGWWGLIISGITFVLFLFTF), 340 to 360 (IFLFPAVLYSGLQWGAQDAWL), 382 to 402 (AVAIMNVPCIIGATIGCIYGG), 426 to 446 (LWLMILPCIINPIGLFMFGIG), 458 to 478 (VGLGFIGFGWGCAGDISMAYL), 486 to 506 (VLEAMVGVSVINNTFGYVFTF), and 522 to 542 (ISIGVLCFIFIATSFPMILCG).

It belongs to the major facilitator superfamily.

It localises to the cytoplasm. Its subcellular location is the cell cortex. It is found in the membrane. This is an uncharacterized protein from Schizosaccharomyces pombe (strain 972 / ATCC 24843) (Fission yeast).